Here is a 361-residue protein sequence, read N- to C-terminus: Phospho-N-acetylmuramoyl-pentapeptide-transferase (361 aa).

The next 10 membrane-spanning stretches (helical) occupy residues 21–41 (YITL…FLVG), 73–93 (TMGG…WADL), 97–117 (FVWV…VDDW), 134–154 (YFWQ…TATV), 168–188 (LVLP…IVGT), 200–220 (GLAI…AYVA), 237–257 (AGEL…FLWF), 264–284 (VFMG…VAVI), 289–309 (IVLF…MLQV), and 338–358 (QVVV…LSTL).

It belongs to the glycosyltransferase 4 family. MraY subfamily. It depends on Mg(2+) as a cofactor.

Its subcellular location is the cell inner membrane. The catalysed reaction is UDP-N-acetyl-alpha-D-muramoyl-L-alanyl-gamma-D-glutamyl-meso-2,6-diaminopimeloyl-D-alanyl-D-alanine + di-trans,octa-cis-undecaprenyl phosphate = di-trans,octa-cis-undecaprenyl diphospho-N-acetyl-alpha-D-muramoyl-L-alanyl-D-glutamyl-meso-2,6-diaminopimeloyl-D-alanyl-D-alanine + UMP. The protein operates within cell wall biogenesis; peptidoglycan biosynthesis. Its function is as follows. Catalyzes the initial step of the lipid cycle reactions in the biosynthesis of the cell wall peptidoglycan: transfers peptidoglycan precursor phospho-MurNAc-pentapeptide from UDP-MurNAc-pentapeptide onto the lipid carrier undecaprenyl phosphate, yielding undecaprenyl-pyrophosphoryl-MurNAc-pentapeptide, known as lipid I. The protein is Phospho-N-acetylmuramoyl-pentapeptide-transferase of Methylobacillus flagellatus (strain ATCC 51484 / DSM 6875 / VKM B-1610 / KT).